Here is a 186-residue protein sequence, read N- to C-terminus: Ribosome-recycling factor (186 aa).

Belongs to the RRF family.

The protein localises to the cytoplasm. Its function is as follows. Responsible for the release of ribosomes from messenger RNA at the termination of protein biosynthesis. May increase the efficiency of translation by recycling ribosomes from one round of translation to another. This chain is Ribosome-recycling factor, found in Paraburkholderia phymatum (strain DSM 17167 / CIP 108236 / LMG 21445 / STM815) (Burkholderia phymatum).